A 140-amino-acid polypeptide reads, in one-letter code: Large ribosomal subunit protein uL11 (140 aa).

Belongs to the universal ribosomal protein uL11 family. In terms of assembly, part of the ribosomal stalk of the 50S ribosomal subunit. Interacts with L10 and the large rRNA to form the base of the stalk. L10 forms an elongated spine to which L12 dimers bind in a sequential fashion forming a multimeric L10(L12)X complex. One or more lysine residues are methylated.

Functionally, forms part of the ribosomal stalk which helps the ribosome interact with GTP-bound translation factors. The sequence is that of Large ribosomal subunit protein uL11 from Dehalococcoides mccartyi (strain ATCC BAA-2100 / JCM 16839 / KCTC 5957 / BAV1).